Reading from the N-terminus, the 406-residue chain is Type II secretion system protein F (406 aa).

At 1-171 the chain is on the cytoplasmic side; that stretch reads MAAFEYKALD…KMRSKLQQAM (171 aa). Positions 97, 151, and 155 each coordinate Ca(2+). A helical transmembrane segment spans residues 172–192; it reads IYPVVLVVFAVGIVAFLLAAV. The Periplasmic portion of the chain corresponds to 193 to 223; sequence VPKIVGQFVQMGQALPASTQFLLDASDFLQH. The helical transmembrane segment at 224-244 threads the bilayer; the sequence is WGISLLVGLLMLIYLVRWLLT. Topologically, residues 245–368 are cytoplasmic; the sequence is KPDIRLRWDR…QDNSFESTVN (124 aa). A helical transmembrane segment spans residues 369-389; the sequence is IALGIFTPALIALMAGMVLFI. The Periplasmic segment spans residues 390–406; sequence VMATLMPILEMNNLMSR.

Belongs to the GSP F family. Type II secretion system is composed of four main components: the outer membrane complex, the inner membrane complex, the cytoplasmic secretion ATPase and the periplasm-spanning pseudopilus. Homodimer. Interacts with EpsE/GspE and EpsL/GspL components.

The protein resides in the cell inner membrane. Functionally, component of the type II secretion system inner membrane complex required for the energy-dependent secretion of extracellular factors such as proteases and toxins from the periplasm. This Vibrio cholerae serotype O1 (strain ATCC 39315 / El Tor Inaba N16961) protein is Type II secretion system protein F (epsF).